The following is a 203-amino-acid chain: ATP-dependent Clp protease proteolytic subunit 2 (203 aa).

Ser98 serves as the catalytic Nucleophile. His123 is an active-site residue.

The protein belongs to the peptidase S14 family. As to quaternary structure, fourteen ClpP subunits assemble into 2 heptameric rings which stack back to back to give a disk-like structure with a central cavity, resembling the structure of eukaryotic proteasomes.

Its subcellular location is the cytoplasm. The catalysed reaction is Hydrolysis of proteins to small peptides in the presence of ATP and magnesium. alpha-casein is the usual test substrate. In the absence of ATP, only oligopeptides shorter than five residues are hydrolyzed (such as succinyl-Leu-Tyr-|-NHMec, and Leu-Tyr-Leu-|-Tyr-Trp, in which cleavage of the -Tyr-|-Leu- and -Tyr-|-Trp bonds also occurs).. Cleaves peptides in various proteins in a process that requires ATP hydrolysis. Has a chymotrypsin-like activity. Plays a major role in the degradation of misfolded proteins. The sequence is that of ATP-dependent Clp protease proteolytic subunit 2 from Chlamydia muridarum (strain MoPn / Nigg).